Reading from the N-terminus, the 689-residue chain is DNA-directed RNA polymerase subunit beta' (689 aa).

Zn(2+)-binding residues include Cys-69, Cys-71, Cys-87, and Cys-90. Positions 489, 491, and 493 each coordinate Mg(2+).

Belongs to the RNA polymerase beta' chain family. RpoC1 subfamily. As to quaternary structure, in plastids the minimal PEP RNA polymerase catalytic core is composed of four subunits: alpha, beta, beta', and beta''. When a (nuclear-encoded) sigma factor is associated with the core the holoenzyme is formed, which can initiate transcription. The cofactor is Mg(2+). It depends on Zn(2+) as a cofactor.

The protein resides in the plastid. The protein localises to the chloroplast. It catalyses the reaction RNA(n) + a ribonucleoside 5'-triphosphate = RNA(n+1) + diphosphate. Its function is as follows. DNA-dependent RNA polymerase catalyzes the transcription of DNA into RNA using the four ribonucleoside triphosphates as substrates. This Helianthus annuus (Common sunflower) protein is DNA-directed RNA polymerase subunit beta'.